Here is an 817-residue protein sequence, read N- to C-terminus: Lon protease 1 (817 aa).

Residues 18-216 (VPLLPLRDII…KLYELMQGEI (199 aa)) enclose the Lon N-terminal domain. Residue 368-375 (GPPGVGKT) participates in ATP binding. The 182-residue stretch at 604-785 (EDQVGIVTGL…DDVLREALVL (182 aa)) folds into the Lon proteolytic domain. Active-site residues include S691 and K734. Positions 789–817 (EEFGRKPTTDGGKLGGTTELPASPAVAPA) are disordered.

This sequence belongs to the peptidase S16 family. As to quaternary structure, homohexamer. Organized in a ring with a central cavity.

The protein localises to the cytoplasm. It carries out the reaction Hydrolysis of proteins in presence of ATP.. Functionally, ATP-dependent serine protease that mediates the selective degradation of mutant and abnormal proteins as well as certain short-lived regulatory proteins. Required for cellular homeostasis and for survival from DNA damage and developmental changes induced by stress. Degrades polypeptides processively to yield small peptide fragments that are 5 to 10 amino acids long. Binds to DNA in a double-stranded, site-specific manner. The protein is Lon protease 1 of Myxococcus xanthus.